A 167-amino-acid polypeptide reads, in one-letter code: Zymogen granule membrane protein 16 (167 aa).

The signal sequence occupies residues 1–16 (MLAVALLVLLCASASA). The Jacalin-type lectin domain maps to 24–159 (SSYSGEYGGK…IDSISLHWDT (136 aa)).

This sequence belongs to the jacalin lectin family.

It localises to the secreted. The protein resides in the extracellular space. The protein localises to the extracellular matrix. It is found in the zymogen granule lumen. Its subcellular location is the golgi apparatus lumen. Functionally, may play a role in protein trafficking. May act as a linker molecule between the submembranous matrix on the luminal side of zymogen granule membrane (ZGM) and aggregated secretory proteins during granule formation in the TGN. This Mus musculus (Mouse) protein is Zymogen granule membrane protein 16 (Zg16).